The sequence spans 232 residues: Ribosome maturation protein SDO1 homolog (232 aa).

The protein belongs to the SDO1/SBDS family.

The protein is Ribosome maturation protein SDO1 homolog of Methanothermobacter thermautotrophicus (strain ATCC 29096 / DSM 1053 / JCM 10044 / NBRC 100330 / Delta H) (Methanobacterium thermoautotrophicum).